We begin with the raw amino-acid sequence, 367 residues long: 4-hydroxy-3-methylbut-2-en-1-yl diphosphate synthase (flavodoxin) (367 aa).

Residues Cys-268, Cys-271, Cys-303, and Glu-310 each contribute to the [4Fe-4S] cluster site.

The protein belongs to the IspG family. The cofactor is [4Fe-4S] cluster.

The enzyme catalyses (2E)-4-hydroxy-3-methylbut-2-enyl diphosphate + oxidized [flavodoxin] + H2O + 2 H(+) = 2-C-methyl-D-erythritol 2,4-cyclic diphosphate + reduced [flavodoxin]. The protein operates within isoprenoid biosynthesis; isopentenyl diphosphate biosynthesis via DXP pathway; isopentenyl diphosphate from 1-deoxy-D-xylulose 5-phosphate: step 5/6. Converts 2C-methyl-D-erythritol 2,4-cyclodiphosphate (ME-2,4cPP) into 1-hydroxy-2-methyl-2-(E)-butenyl 4-diphosphate. This chain is 4-hydroxy-3-methylbut-2-en-1-yl diphosphate synthase (flavodoxin), found in Shouchella clausii (strain KSM-K16) (Alkalihalobacillus clausii).